The chain runs to 638 residues: Probable glycerol-3-phosphate dehydrogenase, mitochondrial (638 aa).

Residue 100–128 (DLIVIGGGATGTGVALDAQSRGMKVALFE) coordinates FAD.

It belongs to the FAD-dependent glycerol-3-phosphate dehydrogenase family. Requires FAD as cofactor.

It is found in the mitochondrion. The enzyme catalyses a quinone + sn-glycerol 3-phosphate = dihydroxyacetone phosphate + a quinol. It functions in the pathway polyol metabolism; glycerol degradation via glycerol kinase pathway; glycerone phosphate from sn-glycerol 3-phosphate (anaerobic route): step 1/1. This is Probable glycerol-3-phosphate dehydrogenase, mitochondrial from Dictyostelium discoideum (Social amoeba).